A 353-amino-acid chain; its full sequence is Quinolinate synthase (353 aa).

Residues His-47 and Ser-68 each coordinate iminosuccinate. Cys-113 contacts [4Fe-4S] cluster. Iminosuccinate-binding positions include 139-141 and Ser-156; that span reads YAN. Cys-200 lines the [4Fe-4S] cluster pocket. Iminosuccinate-binding positions include 226 to 228 and Thr-243; that span reads HPE. [4Fe-4S] cluster is bound at residue Cys-297.

The protein belongs to the quinolinate synthase family. Type 1 subfamily. Requires [4Fe-4S] cluster as cofactor.

It is found in the cytoplasm. The catalysed reaction is iminosuccinate + dihydroxyacetone phosphate = quinolinate + phosphate + 2 H2O + H(+). It participates in cofactor biosynthesis; NAD(+) biosynthesis; quinolinate from iminoaspartate: step 1/1. In terms of biological role, catalyzes the condensation of iminoaspartate with dihydroxyacetone phosphate to form quinolinate. The polypeptide is Quinolinate synthase (Vibrio cholerae serotype O1 (strain ATCC 39541 / Classical Ogawa 395 / O395)).